A 438-amino-acid polypeptide reads, in one-letter code: MNVKKTENALSLTLKNFIKSESFGGIFLFLNAVLAMVVANSFLKESYFALWHTPFGFQIGDFFIGFSLHNWIDDVLMALFFLMIGLEIKRELLFGELSSFKKASFPVIAAIGGMIAPGLIYFFLNADTPSQHGFGIPMATDIAFALGVIMLLGKRVPTALKVFLITLAVADDLGAIVVIALFYTTNLKFAWLLGALGVVLILAVLNRLNVRSLVPYLLLGVLLWFCVHQSGIHATIAAVILAFMIPVKIPKDSKNVELLELGKRYAETSSGALLTKEQQEILHSIEEKASALQSPLERLEHFLAPISGYFIMPLFAFANAGVSVDSSINLEVDKVLLGVILGLCLGKPLGIFLITFISEKLKITARPKGISWWHILGAGLLAGIGFTMSMFISNLAFTSEHKDAMEVAKIAILLGSLISGIIGALYLFALDKRAALKK.

A run of 11 helical transmembrane segments spans residues 23–43 (FGGI…NSFL), 62–82 (FFIG…LFFL), 104–124 (SFPV…YFFL), 133–153 (GFGI…MLLG), 162–182 (VFLI…IALF), 185–205 (TNLK…LAVL), 221–241 (VLLW…AVIL), 302–322 (FLAP…NAGV), 337–357 (LGVI…ITFI), 372–392 (WWHI…SMFI), and 410–430 (IAIL…LFAL).

Belongs to the NhaA Na(+)/H(+) (TC 2.A.33) antiporter family.

It localises to the cell inner membrane. It carries out the reaction Na(+)(in) + 2 H(+)(out) = Na(+)(out) + 2 H(+)(in). Its function is as follows. Na(+)/H(+) antiporter that extrudes sodium in exchange for external protons. In Helicobacter pylori (strain HPAG1), this protein is Na(+)/H(+) antiporter NhaA.